The primary structure comprises 356 residues: Stomatin-like protein 2, mitochondrial (356 aa).

Residues 1-28 constitute a mitochondrion transit peptide; sequence MLARAARGTGALLLRGSLLASGRAPRRA. Serine 17 carries the phosphoserine; by PKC/PRKCZ modification. At tyrosine 124 the chain carries Phosphotyrosine. N6-acetyllysine; alternate is present on lysine 145. Position 145 is an N6-succinyllysine; alternate (lysine 145). Positions 215 to 252 form a coiled coil; sequence INVAEGKKQAQILASEAEKAEQINQAAGEASAVLAKAK. Lysine 233 carries the N6-acetyllysine modification. Residues 321–356 are disordered; that stretch reads KAPVPGTPDSLSSGSSRDVQGTDASLDEELDRVKMS. Threonine 327 carries the phosphothreonine modification. The segment covering 329 to 343 has biased composition (polar residues); sequence DSLSSGSSRDVQGTD. Position 330 is a phosphoserine (serine 330).

This sequence belongs to the band 7/mec-2 family. Forms homooligomers. Interacts with MFN2; may form heterooligomers. Interacts with CACNA2D2. Interacts with PHB1 and PHB2; recruits them to cardiolipin-enriched mitochondrial membranes and stabilizes them. In terms of processing, hyperphosphorylated at Ser-17 in some patients with monoclonal gammopathy of undetermined significance (MGUS), multiple myeloma (MM) and Waldenstrom macroglobulinemia due to impaired dephosphorylation by PP2A. In terms of tissue distribution, ubiquitously expressed at low levels. Expressed in lymphoid tissues (at protein level).

It is found in the cell membrane. It localises to the mitochondrion. Its subcellular location is the mitochondrion inner membrane. The protein resides in the mitochondrion intermembrane space. The protein localises to the membrane raft. It is found in the cytoplasm. It localises to the cytoskeleton. In terms of biological role, mitochondrial protein that probably regulates the biogenesis and the activity of mitochondria. Stimulates cardiolipin biosynthesis, binds cardiolipin-enriched membranes where it recruits and stabilizes some proteins including prohibitin and may therefore act in the organization of functional microdomains in mitochondrial membranes. Through regulation of the mitochondrial function may play a role into several biological processes including cell migration, cell proliferation, T-cell activation, calcium homeostasis and cellular response to stress. May play a role in calcium homeostasis through negative regulation of calcium efflux from mitochondria. Required for mitochondrial hyperfusion a pro-survival cellular response to stress which results in increased ATP production by mitochondria. May also regulate the organization of functional domains at the plasma membrane and play a role in T-cell activation through association with the T-cell receptor signaling complex and its regulation. The protein is Stomatin-like protein 2, mitochondrial (STOML2) of Homo sapiens (Human).